Reading from the N-terminus, the 393-residue chain is 1-deoxy-D-xylulose 5-phosphate reductoisomerase (393 aa).

Thr-10, Gly-11, Ser-12, Ile-13, Arg-37, and Asn-124 together coordinate NADPH. 1-deoxy-D-xylulose 5-phosphate is bound at residue Lys-125. Glu-126 contributes to the NADPH binding site. Asp-150 serves as a coordination point for Mn(2+). Positions 151, 152, 182, and 205 each coordinate 1-deoxy-D-xylulose 5-phosphate. Residue Glu-152 coordinates Mn(2+). An NADPH-binding site is contributed by Gly-211. The 1-deoxy-D-xylulose 5-phosphate site is built by Ser-218, Asn-223, Lys-224, and Glu-227. Mn(2+) is bound at residue Glu-227.

The protein belongs to the DXR family. The cofactor is Mg(2+). Mn(2+) serves as cofactor.

The enzyme catalyses 2-C-methyl-D-erythritol 4-phosphate + NADP(+) = 1-deoxy-D-xylulose 5-phosphate + NADPH + H(+). It functions in the pathway isoprenoid biosynthesis; isopentenyl diphosphate biosynthesis via DXP pathway; isopentenyl diphosphate from 1-deoxy-D-xylulose 5-phosphate: step 1/6. Its function is as follows. Catalyzes the NADPH-dependent rearrangement and reduction of 1-deoxy-D-xylulose-5-phosphate (DXP) to 2-C-methyl-D-erythritol 4-phosphate (MEP). This is 1-deoxy-D-xylulose 5-phosphate reductoisomerase from Nitrosococcus oceani (strain ATCC 19707 / BCRC 17464 / JCM 30415 / NCIMB 11848 / C-107).